A 753-amino-acid chain; its full sequence is Fatty acid oxidation complex subunit alpha (753 aa).

The enoyl-CoA hydratase stretch occupies residues 8–197; the sequence is SVTHPAFTLN…KMGLVDDVVP (190 aa). The interval 313–747 is 3-hydroxyacyl-CoA dehydrogenase; it reads RAIHRVGVLG…FYPVDANIDE (435 aa). The tract at residues 593 to 622 is disordered; that stretch reads SNPTLHSNSTKNSSPTKNGNSPAKRNSFKW. Residues 599-614 show a composition bias toward low complexity; the sequence is SNSTKNSSPTKNGNSP.

The protein in the N-terminal section; belongs to the enoyl-CoA hydratase/isomerase family. In the central section; belongs to the 3-hydroxyacyl-CoA dehydrogenase family. As to quaternary structure, heterotetramer of two alpha chains (FadJ) and two beta chains (FadI).

The protein localises to the cytoplasm. The enzyme catalyses a (3S)-3-hydroxyacyl-CoA = a (2E)-enoyl-CoA + H2O. It catalyses the reaction a 4-saturated-(3S)-3-hydroxyacyl-CoA = a (3E)-enoyl-CoA + H2O. It carries out the reaction a (3S)-3-hydroxyacyl-CoA + NAD(+) = a 3-oxoacyl-CoA + NADH + H(+). The catalysed reaction is (3S)-3-hydroxybutanoyl-CoA = (3R)-3-hydroxybutanoyl-CoA. Its pathway is lipid metabolism; fatty acid beta-oxidation. Catalyzes the formation of a hydroxyacyl-CoA by addition of water on enoyl-CoA. Also exhibits 3-hydroxyacyl-CoA epimerase and 3-hydroxyacyl-CoA dehydrogenase activities. This is Fatty acid oxidation complex subunit alpha from Yersinia pseudotuberculosis serotype I (strain IP32953).